Here is a 214-residue protein sequence, read N- to C-terminus: uncharacterized protein (214 aa).

The N-terminal stretch at 1–24 (MKIWIKAICITSFVIQMSACSSSA) is a signal peptide. The region spanning 64 to 197 (ETVKGKVLHI…KEAKAGVWSI (134 aa)) is the TNase-like domain. Active-site residues include Arg-91, Glu-99, and Arg-142.

This is an uncharacterized protein from Bacillus anthracis.